The sequence spans 145 residues: uncharacterized protein (145 aa).

The disordered stretch occupies residues 71-95; it reads GARGRGRTYTKGGSSRSPASWAEQG.

This is an uncharacterized protein from Homo sapiens (Human).